We begin with the raw amino-acid sequence, 500 residues long: L-arabinose isomerase (500 aa).

The Mn(2+) site is built by glutamate 306, glutamate 333, histidine 350, and histidine 450.

It belongs to the arabinose isomerase family. Homohexamer. Mn(2+) serves as cofactor.

It catalyses the reaction beta-L-arabinopyranose = L-ribulose. The protein operates within carbohydrate degradation; L-arabinose degradation via L-ribulose; D-xylulose 5-phosphate from L-arabinose (bacterial route): step 1/3. Functionally, catalyzes the conversion of L-arabinose to L-ribulose. The protein is L-arabinose isomerase of Salmonella enteritidis PT4 (strain P125109).